The sequence spans 427 residues: MNRNEILFDRAKAIIPGGVNSPVRAFGSVGGVPRFIKKAEGAYVWDENGTRYTDYVGSWGPAIVGHAHPEVVETVCEAALGGLSFGAPTEGEIVIAEEIAKIMPSVERLRLVSSGTEATMTAIRLARGFTGRDKIIKFEGCYHGHSDSLLVKAGSGLLTFGNPSSAGVPADFTKHTLVLEYNNIAQLEEAFAQSGNEIACVIVEPFVGNMNLVRPTEAFVKALRGLTEKYGAVLIYDEVMTGFRVALGGAQSLHGITPDLTTMGKVIGGGMPLAAFGGRKDIMECISPLGGVYQAGTLSGNPIAVAAGLKTLEIIQREGFYENLTARTEQLVQGFRTAADAAGIEFTADSVGGMFGLYFAAHAPRNYADMARSNIEGFKQFFHGMLDRNVAFGPSAYEAGFVSAAHTPELIDETVAVAVEVFKAMAE.

K265 carries the N6-(pyridoxal phosphate)lysine modification.

The protein belongs to the class-III pyridoxal-phosphate-dependent aminotransferase family. HemL subfamily. As to quaternary structure, homodimer. It depends on pyridoxal 5'-phosphate as a cofactor.

The protein resides in the cytoplasm. The enzyme catalyses (S)-4-amino-5-oxopentanoate = 5-aminolevulinate. The protein operates within porphyrin-containing compound metabolism; protoporphyrin-IX biosynthesis; 5-aminolevulinate from L-glutamyl-tRNA(Glu): step 2/2. This is Glutamate-1-semialdehyde 2,1-aminomutase from Neisseria meningitidis serogroup B (strain ATCC BAA-335 / MC58).